A 218-amino-acid chain; its full sequence is ATP-dependent Clp protease proteolytic subunit 2 (218 aa).

It belongs to the peptidase S14 family. As to quaternary structure, fourteen ClpP subunits assemble into 2 heptameric rings which stack back to back to give a disk-like structure with a central cavity, resembling the structure of eukaryotic proteasomes.

It localises to the cytoplasm. It catalyses the reaction Hydrolysis of proteins to small peptides in the presence of ATP and magnesium. alpha-casein is the usual test substrate. In the absence of ATP, only oligopeptides shorter than five residues are hydrolyzed (such as succinyl-Leu-Tyr-|-NHMec, and Leu-Tyr-Leu-|-Tyr-Trp, in which cleavage of the -Tyr-|-Leu- and -Tyr-|-Trp bonds also occurs).. In terms of biological role, cleaves peptides in various proteins in a process that requires ATP hydrolysis. Has a chymotrypsin-like activity. Plays a major role in the degradation of misfolded proteins. In Gloeobacter violaceus (strain ATCC 29082 / PCC 7421), this protein is ATP-dependent Clp protease proteolytic subunit 2.